We begin with the raw amino-acid sequence, 355 residues long: Peptide chain release factor 1 (355 aa).

Gln231 is modified (N5-methylglutamine). Basic and acidic residues predominate over residues 280–293 (KERKAKEQSERKDQ). The tract at residues 280–307 (KERKAKEQSERKDQVGTGDRSGRIRTYN) is disordered.

This sequence belongs to the prokaryotic/mitochondrial release factor family. Methylated by PrmC. Methylation increases the termination efficiency of RF1.

The protein resides in the cytoplasm. Functionally, peptide chain release factor 1 directs the termination of translation in response to the peptide chain termination codons UAG and UAA. The sequence is that of Peptide chain release factor 1 from Campylobacter hominis (strain ATCC BAA-381 / DSM 21671 / CCUG 45161 / LMG 19568 / NCTC 13146 / CH001A).